We begin with the raw amino-acid sequence, 85 residues long: U4-theraphotoxin-Hhn1a (85 aa).

Residues 1-22 form the signal peptide; the sequence is MKVTLIAILTCATVLVLHTTAA. Residues 23-48 constitute a propeptide that is removed on maturation; it reads EELEAESQLMEVGMPDTELAAVDEER. Cystine bridges form between cysteine 52-cysteine 66, cysteine 56-cysteine 77, and cysteine 71-cysteine 82.

The protein belongs to the neurotoxin 12 (Hwtx-2) family. 02 (Hwtx-2) subfamily. In terms of assembly, monomer. As to expression, expressed by the venom gland.

The protein localises to the secreted. Neurotoxin active on both insects and mammals. The sequence is that of U4-theraphotoxin-Hhn1a from Cyriopagopus hainanus (Chinese bird spider).